Here is a 427-residue protein sequence, read N- to C-terminus: 3-phosphoshikimate 1-carboxyvinyltransferase (427 aa).

K20, S21, and R25 together coordinate 3-phosphoshikimate. K20 serves as a coordination point for phosphoenolpyruvate. Phosphoenolpyruvate-binding residues include G92 and R120. 3-phosphoshikimate is bound by residues S166, Q168, D312, and K339. Residue Q168 participates in phosphoenolpyruvate binding. The active-site Proton acceptor is D312. Residues R343 and R385 each contribute to the phosphoenolpyruvate site.

Belongs to the EPSP synthase family. Monomer.

It is found in the cytoplasm. It carries out the reaction 3-phosphoshikimate + phosphoenolpyruvate = 5-O-(1-carboxyvinyl)-3-phosphoshikimate + phosphate. Its pathway is metabolic intermediate biosynthesis; chorismate biosynthesis; chorismate from D-erythrose 4-phosphate and phosphoenolpyruvate: step 6/7. In terms of biological role, catalyzes the transfer of the enolpyruvyl moiety of phosphoenolpyruvate (PEP) to the 5-hydroxyl of shikimate-3-phosphate (S3P) to produce enolpyruvyl shikimate-3-phosphate and inorganic phosphate. This chain is 3-phosphoshikimate 1-carboxyvinyltransferase, found in Streptococcus agalactiae serotype III (strain NEM316).